The following is a 267-amino-acid chain: MMGINERKGFDFEYYQRNLLLQEKGFPTPKATSTGTTIVGVIAKDCIVLGADTRATAGPIIADKNCKKLHLISPNIWCAGAGTAADTEFVTSMISSNIELHSLYTNRKPRVVTALTMLKQHLFRYQGHIGAYLVLGGYDCKGPHLFTIAAHGSSDKLPYVALGSGSLAAISVLETKYQPDLERHEAMELVKEAIEAGIFNDLGSGSNCDLVVIDEEKATPYRGYSKPNERATKQSKYTYDRGTTAVLKEDIYKFVTVQDLDEMQVDV.

Residues 1–35 (MMGINERKGFDFEYYQRNLLLQEKGFPTPKATSTG) constitute a propeptide, removed in mature form. Thr36 (nucleophile) is an active-site residue.

Belongs to the peptidase T1B family. The 26S proteasome consists of a 20S proteasome core and two 19S regulatory subunits. The 20S proteasome core is composed of 28 subunits that are arranged in four stacked rings, resulting in a barrel-shaped structure. The two end rings are each formed by seven alpha subunits, and the two central rings are each formed by seven beta subunits. The catalytic chamber with the active sites is on the inside of the barrel.

The protein resides in the cytoplasm. The protein localises to the nucleus. The catalysed reaction is Cleavage of peptide bonds with very broad specificity.. In terms of biological role, the proteasome is a multicatalytic proteinase complex which is characterized by its ability to cleave peptides with Arg, Phe, Tyr, Leu, and Glu adjacent to the leaving group at neutral or slightly basic pH. The proteasome has an ATP-dependent proteolytic activity (Potential). The polypeptide is Probable proteasome subunit beta type-2 (pup1) (Schizosaccharomyces pombe (strain 972 / ATCC 24843) (Fission yeast)).